The primary structure comprises 253 residues: 4-hydroxy-tetrahydrodipicolinate reductase (253 aa).

NAD(+) is bound at residue 16–21; that stretch reads GDTGRM. Arg-44 contacts NADP(+). Residues 85-87 and 111-114 contribute to the NAD(+) site; these read GTT and CANT. Catalysis depends on His-144, which acts as the Proton donor/acceptor. (S)-2,3,4,5-tetrahydrodipicolinate is bound at residue His-145. Lys-148 acts as the Proton donor in catalysis. 154 to 155 contributes to the (S)-2,3,4,5-tetrahydrodipicolinate binding site; that stretch reads GT.

Belongs to the DapB family.

Its subcellular location is the cytoplasm. It catalyses the reaction (S)-2,3,4,5-tetrahydrodipicolinate + NAD(+) + H2O = (2S,4S)-4-hydroxy-2,3,4,5-tetrahydrodipicolinate + NADH + H(+). It carries out the reaction (S)-2,3,4,5-tetrahydrodipicolinate + NADP(+) + H2O = (2S,4S)-4-hydroxy-2,3,4,5-tetrahydrodipicolinate + NADPH + H(+). The protein operates within amino-acid biosynthesis; L-lysine biosynthesis via DAP pathway; (S)-tetrahydrodipicolinate from L-aspartate: step 4/4. Catalyzes the conversion of 4-hydroxy-tetrahydrodipicolinate (HTPA) to tetrahydrodipicolinate. The sequence is that of 4-hydroxy-tetrahydrodipicolinate reductase from Chlamydia trachomatis serovar A (strain ATCC VR-571B / DSM 19440 / HAR-13).